The following is a 495-amino-acid chain: Probable endopolygalacturonase D (495 aa).

Residues 1–16 (MKRSALLASFLPLALG) form the signal peptide. Cysteines 154 and 169 form a disulfide. PbH1 repeat units follow at residues 261–283 (MYNS…EIEN), 284–322 (TEYL…DIKQ), and 323–344 (SDFL…AVTS). Asparagine 295 carries an N-linked (GlcNAc...) asparagine glycan. Aspartate 337 serves as the catalytic Proton donor. An intrachain disulfide couples cysteine 339 to cysteine 355. The active site involves histidine 359. N-linked (GlcNAc...) asparagine glycosylation is present at asparagine 371. 2 PbH1 repeats span residues 374–395 (VDGV…RIKS) and 403–425 (VYNV…DIQQ). N-linked (GlcNAc...) asparagine glycosylation is found at asparagine 410 and asparagine 444. Cystine bridges form between cysteine 464–cysteine 469 and cysteine 487–cysteine 494. One copy of the PbH1 6 repeat lies at 469-492 (CSNFVFTDVDITGGSDDSCNYPSS).

This sequence belongs to the glycosyl hydrolase 28 family.

The protein resides in the secreted. It carries out the reaction (1,4-alpha-D-galacturonosyl)n+m + H2O = (1,4-alpha-D-galacturonosyl)n + (1,4-alpha-D-galacturonosyl)m.. Involved in maceration and soft-rotting of plant tissue. Hydrolyzes the 1,4-alpha glycosidic bonds of de-esterified pectate in the smooth region of the plant cell wall. The polypeptide is Probable endopolygalacturonase D (pgaD) (Aspergillus niger (strain ATCC MYA-4892 / CBS 513.88 / FGSC A1513)).